The following is an 87-amino-acid chain: Small ribosomal subunit protein uS15c (87 aa).

It belongs to the universal ribosomal protein uS15 family. In terms of assembly, part of the 30S ribosomal subunit.

Its subcellular location is the plastid. It is found in the chloroplast. The polypeptide is Small ribosomal subunit protein uS15c (rps15) (Solanum lycopersicum (Tomato)).